Here is a 151-residue protein sequence, read N- to C-terminus: FAD synthase (151 aa).

ATP-binding positions include 21–22 (TF), 26–29 (HPGH), and D104.

The protein belongs to the archaeal FAD synthase family. In terms of assembly, homodimer. It depends on a divalent metal cation as a cofactor.

It catalyses the reaction FMN + ATP + H(+) = FAD + diphosphate. It participates in cofactor biosynthesis; FAD biosynthesis; FAD from FMN: step 1/1. In terms of biological role, catalyzes the transfer of the AMP portion of ATP to flavin mononucleotide (FMN) to produce flavin adenine dinucleotide (FAD) coenzyme. This is FAD synthase from Methanosarcina acetivorans (strain ATCC 35395 / DSM 2834 / JCM 12185 / C2A).